The chain runs to 248 residues: UPF0246 protein RPR_00055 (248 aa).

It belongs to the UPF0246 family.

In Rickettsia peacockii (strain Rustic), this protein is UPF0246 protein RPR_00055.